The chain runs to 282 residues: Serine/arginine-rich splicing factor 8 (282 aa).

Serine 2 bears the N-acetylserine mark. Phosphoserine occurs at positions 2 and 26. Residues 14–92 (ITLKVDNLTY…RELRVQVARY (79 aa)) enclose the RRM domain. Residues 91-282 (RYGRRDLPRS…SPEEEGQMSS (192 aa)) form a disordered region. Residues 93–107 (GRRDLPRSRQGEPRG) show a composition bias toward basic and acidic residues. Composition is skewed to basic residues over residues 116 to 136 (RRSR…RSRS) and 144 to 154 (SRSRSRYRGSR). Low complexity-rich tracts occupy residues 155 to 177 (YSRS…PYSR) and 185 to 200 (YGGS…NSRY). Phosphoserine is present on residues serine 156, serine 158, serine 171, serine 173, and serine 196. Positions 201 to 210 (SRYHSSRSHS) are enriched in basic residues. Low complexity-rich tracts occupy residues 211–227 (KSGS…SKSS) and 234–255 (SSSV…SPPR). Over residues 256-271 (VSKRKSKSRSRSKRPP) the composition is skewed to basic residues. Serine 273 bears the Phosphoserine mark.

The protein belongs to the splicing factor SR family. In terms of tissue distribution, strongly expressed in pancreas, spleen and prostate. Weakly expressed in lung, liver and thymus.

The protein localises to the nucleus. Its function is as follows. Involved in pre-mRNA alternative splicing. This Homo sapiens (Human) protein is Serine/arginine-rich splicing factor 8 (SRSF8).